Here is a 156-residue protein sequence, read N- to C-terminus: CD-NTase/cGAS isopeptidase (156 aa).

Residues Leu16–Ser156 form the MPN domain. The active-site Proton donor/acceptor is the Glu39. Zn(2+) contacts are provided by His101, His103, and Asp114. The short motif at His101–Asp114 is the JAMM motif element.

The protein belongs to the peptidase M67B family. Cap3 isopeptidase subfamily. Zn(2+) serves as cofactor.

Cleavage of conjugated proteins is inhibited by EDTA. Functionally, metalloprotease priming reversal component of a CBASS system. CBASS (cyclic oligonucleotide-based antiphage signaling system) provides immunity against bacteriophages. The CD-NTase protein (DncV) synthesizes cyclic nucleotides in response to infection; these serve as specific second messenger signals. The signals activate a diverse range of effectors, leading to bacterial cell death and thus abortive phage infection. A type II-A(GA) CBASS system. Reverses the primed state of DncV, the CD-NTase. Cleaves a DncV-GFP (green fluorescent protein) fusion protein precisely at the C-terminus of DncV. Overexpression decreases the efficacy of CBASS protection against phages T2, T4, T5 and T6, blocks formation of DncV-conjugates in vivo, and inhibits in vivo activation of DncV. Antagonism of phage defense upon overexpression is CBASS-system specific, Cap3 from this bacteria only antagonizes its cognate CBASS system and not that of C.freundii, E.coli or E.hormaechei. Its function is as follows. Protects E.coli against phage infection. When the CBASS operon (capV-dncV-cap2-cap3) is introduced in E.coli MG1655 there is about 100-fold protection against phages P1 and T2. When the operon is introduced in E.coli MG1655 there is a more than 10(3) decrease in the efficiency of T2 plaque formation. Protects 100-fold against phage T5, offers no protection against T7. When the operon is introduced in E.coli MG1655 it protects against phages T2, T4, T5 and T6. Another paper shows the operon confers protection against phages P1, T2, T5 and T6 but not T4 or lambda. The chain is CD-NTase/cGAS isopeptidase from Vibrio cholerae serotype O1 (strain ATCC 39315 / El Tor Inaba N16961).